The chain runs to 122 residues: Large ribosomal subunit protein uL14 (122 aa).

It belongs to the universal ribosomal protein uL14 family. As to quaternary structure, part of the 50S ribosomal subunit. Forms a cluster with proteins L3 and L19. In the 70S ribosome, L14 and L19 interact and together make contacts with the 16S rRNA in bridges B5 and B8.

Binds to 23S rRNA. Forms part of two intersubunit bridges in the 70S ribosome. The chain is Large ribosomal subunit protein uL14 from Xanthomonas axonopodis pv. citri (strain 306).